A 273-amino-acid polypeptide reads, in one-letter code: ATP synthase subunit a (273 aa).

A run of 7 helical transmembrane segments spans residues 34 to 54 (IINM…CLFM), 94 to 114 (FIAP…SLDF), 115 to 135 (LPVD…LITH), 143 to 163 (DLNG…FYNI), 171 to 191 (FVHE…NLLL), 218 to 238 (FLLI…GHVV), and 244 to 264 (AIFH…LTLV).

This sequence belongs to the ATPase A chain family. In terms of assembly, F-type ATPases have 2 components, CF(1) - the catalytic core - and CF(0) - the membrane proton channel. CF(1) has five subunits: alpha(3), beta(3), gamma(1), delta(1), epsilon(1). CF(0) has three main subunits: a(1), b(2) and c(9-12). The alpha and beta chains form an alternating ring which encloses part of the gamma chain. CF(1) is attached to CF(0) by a central stalk formed by the gamma and epsilon chains, while a peripheral stalk is formed by the delta and b chains.

It is found in the cell inner membrane. Its function is as follows. Key component of the proton channel; it plays a direct role in the translocation of protons across the membrane. The chain is ATP synthase subunit a from Janthinobacterium sp. (strain Marseille) (Minibacterium massiliensis).